A 356-amino-acid chain; its full sequence is Outer membrane protein Omp38 (356 aa).

A signal peptide spans 1-19; it reads MKLSRIALATMLVAAPLAA. The 119-residue stretch at 221-339 folds into the OmpA-like domain; sequence ELTEDLNMEL…RVFATITGSR (119 aa). The meso-2,6-diaminopimelate site is built by Asn237, Asp271, Thr273, Asn279, and Arg286.

Belongs to the outer membrane OOP (TC 1.B.6) superfamily. As to quaternary structure, homotrimer. Forms a pore with a size of 1.3 nm.

It localises to the cell outer membrane. The protein localises to the host mitochondrion. Functions as a porin. Induces apoptosis in human cell lines through caspase-dependent and AIF-dependent pathways. Purified Omp38 enters host cell and localizes to the mitochondria, which presumably leads to a release of proapoptotic molecules such as cytochrome c and AIF (apoptosis-inducing factor). Binds peptidoglycan, contributes to cell wall maintenance. In Acinetobacter baumannii (strain ATCC 19606 / DSM 30007 / JCM 6841 / CCUG 19606 / CIP 70.34 / NBRC 109757 / NCIMB 12457 / NCTC 12156 / 81), this protein is Outer membrane protein Omp38.